The following is a 258-amino-acid chain: Cruciform cutting endonuclease 1, mitochondrial (258 aa).

The SAP domain maps to 1–35 (MATVKLSFLQHICKLTGLSRSGRKDELLRRIVDSP). Mg(2+) is bound by residues Asp46 and Asp230.

Homodimer.

Its subcellular location is the mitochondrion. It carries out the reaction Endonucleolytic cleavage at a junction such as a reciprocal single-stranded crossover between two homologous DNA duplexes (Holliday junction).. Capable of resolving Holliday junctions. Specific for 4-way junctions. Seems to be important for the maintenance of mitochondrial DNA. Cleaves fixed junctions at the point of strand exchange. Cleaves after 5'-CT-3' and 5'-TT-3' sequences. The polypeptide is Cruciform cutting endonuclease 1, mitochondrial (cce1) (Schizosaccharomyces pombe (strain 972 / ATCC 24843) (Fission yeast)).